The chain runs to 203 residues: Recombination protein RecR (203 aa).

The C4-type zinc-finger motif lies at Cys56–Cys71. One can recognise a Toprim domain in the interval Ser79–Pro179.

This sequence belongs to the RecR family.

May play a role in DNA repair. It seems to be involved in an RecBC-independent recombinational process of DNA repair. It may act with RecF and RecO. The polypeptide is Recombination protein RecR (Mycolicibacterium vanbaalenii (strain DSM 7251 / JCM 13017 / BCRC 16820 / KCTC 9966 / NRRL B-24157 / PYR-1) (Mycobacterium vanbaalenii)).